The chain runs to 194 residues: Cyclin-dependent kinase inhibitor 4 (194 aa).

Residues 49–58 (LELRSRRLEK) are compositionally biased toward basic and acidic residues. Disordered stretches follow at residues 49 to 70 (LELRSRRLEKLPPPPPPPPRRR) and 107 to 139 (TRETTPCSLIRDPDTISTPGSTTRRSHSSSHCK).

It belongs to the CDI family. ICK/KRP subfamily.

The sequence is that of Cyclin-dependent kinase inhibitor 4 (KRP4) from Oryza sativa subsp. japonica (Rice).